The sequence spans 377 residues: Leucine aminopeptidase A (377 aa).

A signal peptide spans 1–18 (MRFLPCIATLAATASALA). The propeptide occupies 19-79 (IGDHVRSDDQ…SNKKQKLAVT (61 aa)). An N-linked (GlcNAc...) asparagine glycan is attached at Asn-87. 4 residues coordinate Zn(2+): His-176, Asp-195, Glu-234, and Asp-261. N-linked (GlcNAc...) asparagine glycosylation occurs at Asn-288. Cysteines 310 and 314 form a disulfide. A Zn(2+)-binding site is contributed by His-343.

Belongs to the peptidase M28 family. M28E subfamily. In terms of assembly, monomer. Zn(2+) is required as a cofactor.

Its subcellular location is the secreted. Its activity is regulated as follows. Calcium, magnesium and manganese cations reduce peptidase activity to 20.3-51.3 percent. The metal ion chelating reagent EDTA almost completely inhibits activity. The protease inhibitor bacitracin and the aminopeptidase B inhibitor bestatin, as well as DTT and beta-mercaptoethanol act also as lap A inhibitorsD. In terms of biological role, extracellular aminopeptidase that allows assimilation of proteinaceous substrates. The sequence is that of Leucine aminopeptidase A (lapA) from Aspergillus oryzae (strain ATCC 42149 / RIB 40) (Yellow koji mold).